A 1286-amino-acid chain; its full sequence is CLIP-associating protein 2 (1286 aa).

The segment at 1–40 (MRRLICKRICDYKSFDDEESVDGNRPSSAASAFKVPAPKT) is golgi localization. 2 positions are modified to phosphoserine: Ser-14 and Ser-20. The disordered stretch occupies residues 17–70 (DEESVDGNRPSSAASAFKVPAPKTPGNPVNSARKPGSAGGPKAGGTSKEGGAGA). A compositionally biased stretch (gly residues) spans 53–69 (SAGGPKAGGTSKEGGAG). A TOG 1 region spans residues 66–317 (GGAGAVDEDD…KSLQTYLKSS (252 aa)). 3 HEAT repeats span residues 179–214 (HGAE…IRHT), 215–251 (HVPR…EWQT), and 256–293 (RHAA…HFPG). Disordered regions lie at residues 320-350 (VASL…TANP) and 355-374 (GRVS…LQRS). A phosphoserine mark is found at Ser-322, Ser-333, and Ser-336. The segment covering 322-340 (SLPQSDRSSSSSQESLNRP) has biased composition (low complexity). Positions 341–350 (FSSKWSTANP) are enriched in polar residues. A phosphoserine mark is found at Ser-374, Ser-376, and Ser-413. A disordered region spans residues 410-473 (SYASLEDTSD…GSRSGSPGRV (64 aa)). The segment covering 417 to 431 (TSDKMDGTASEDGRV) has biased composition (basic and acidic residues). An interaction with microtubules, MAPRE1 and MAPRE3 region spans residues 450–565 (RGRSRTKMVS…GPGYGMSQSS (116 aa)). A compositionally biased stretch (low complexity) spans 459-473 (SQSQPGSRSGSPGRV). Phosphoserine occurs at positions 461, 465, 469, 484, and 495. Positions 492 to 566 (NSASAQKRSK…PGYGMSQSSR (75 aa)) are disordered. An SXIP motif 1; mediates interaction with MAPRE1 and targeting to microtubule plus ends motif is present at residues 500-503 (SKIP). Ser-513 carries the phosphoserine modification. The short motif at 523–526 (SRIP) is the SXIP motif 2; mediates interaction with MAPRE1 and targeting to microtubule plus ends element. Phosphoserine occurs at positions 531, 535, 570, 572, 581, 614, and 620. The segment covering 606–616 (RYESYGMHSDD) has biased composition (basic and acidic residues). The segment at 606–638 (RYESYGMHSDDDANSDASSACSERSYSSRNGSI) is disordered. Residues 620–634 (SDASSACSERSYSSR) are compositionally biased toward low complexity. The TOG 2 stretch occupies residues 642 to 873 (MRQTEDVAEV…TKLLHNHLRN (232 aa)). HEAT repeat units follow at residues 702–739 (KVFS…KMGA) and 764–801 (LQFN…QMDP). Residue Thr-779 is modified to Phosphothreonine. An interaction with RSN and localization to the Golgi and kinetochores region spans residues 864–1286 (TKLLHNHLRN…DPTTDVSGQS (423 aa)). Disordered regions lie at residues 870-920 (HLRN…FDYD) and 944-990 (SFRS…QPAL). 2 stretches are compositionally biased toward polar residues: residues 872-884 (RNTG…SMGS) and 893-914 (SPAN…TLSP). Ser-884 bears the Phosphoserine mark. Phosphoserine occurs at positions 944, 947, 1005, and 1021. Residues 947-964 (SQEDMSEPLKRDPKKEDG) are compositionally biased toward basic and acidic residues. The tract at residues 1009–1286 (RDYNPYNYSD…DPTTDVSGQS (278 aa)) is required for cortical localization. 3 HEAT repeats span residues 1046–1083 (LDHS…TQEE), 1090–1127 (EHFK…HQPA), and 1208–1245 (LLLP…VIGD).

It belongs to the CLASP family. In terms of assembly, interacts with microtubules. Interacts with MAPRE1; probably required for targeting to the growing microtubule plus ends. Interacts with CLIP2, ERC1, MAPRE3, PHLDB2 and RSN. The interaction with ERC1 may be mediated by PHLDB2. Interacts with GCC2; recruits CLASP2 to Golgi membranes. Interacts with MACF1. Interacts with SOGA1 and MTCL1. Phosphorylated by GSK3B. Phosphorylation by GSK3B may negatively regulate binding to microtubule lattices in lamella.

It localises to the cytoplasm. It is found in the cytoskeleton. Its subcellular location is the microtubule organizing center. The protein localises to the centrosome. The protein resides in the chromosome. It localises to the centromere. It is found in the kinetochore. Its subcellular location is the spindle. The protein localises to the golgi apparatus. The protein resides in the trans-Golgi network. It localises to the cell membrane. It is found in the cell projection. Its subcellular location is the ruffle membrane. The protein localises to the cell cortex. Its function is as follows. Microtubule plus-end tracking protein that promotes the stabilization of dynamic microtubules. Involved in the nucleation of noncentrosomal microtubules originating from the trans-Golgi network (TGN). Required for the polarization of the cytoplasmic microtubule arrays in migrating cells towards the leading edge of the cell. May act at the cell cortex to enhance the frequency of rescue of depolymerizing microtubules by attaching their plus-ends to cortical platforms composed of ERC1 and PHLDB2. This cortical microtubule stabilizing activity is regulated at least in part by phosphatidylinositol 3-kinase signaling. Also performs a similar stabilizing function at the kinetochore which is essential for the bipolar alignment of chromosomes on the mitotic spindle. Acts as a mediator of ERBB2-dependent stabilization of microtubules at the cell cortex. This is CLIP-associating protein 2 (Clasp2) from Rattus norvegicus (Rat).